The chain runs to 463 residues: NADH-ubiquinone oxidoreductase chain 4 (463 aa).

13 helical membrane passes run 24-44 (LWAG…IVLN), 62-82 (TISA…LIAS), 98-118 (IIMI…LELI), 119-139 (LFYI…TRWG), 151-171 (FMFY…AIYI), 198-218 (WALS…HLWL), 232-252 (ILAA…IALF), 260-280 (LSLA…VICV), 285-305 (LKAL…AAIF), 310-330 (WGMN…SALF), 353-373 (LLLP…LGLP), 404-424 (VFGA…TPFT), and 442-462 (LHIL…IAWL).

It belongs to the complex I subunit 4 family.

It is found in the mitochondrion membrane. The enzyme catalyses a ubiquinone + NADH + 5 H(+)(in) = a ubiquinol + NAD(+) + 4 H(+)(out). Functionally, core subunit of the mitochondrial membrane respiratory chain NADH dehydrogenase (Complex I) that is believed to belong to the minimal assembly required for catalysis. Complex I functions in the transfer of electrons from NADH to the respiratory chain. The immediate electron acceptor for the enzyme is believed to be ubiquinone. This is NADH-ubiquinone oxidoreductase chain 4 (ND4) from Strongylocentrotus purpuratus (Purple sea urchin).